A 635-amino-acid chain; its full sequence is Extracellular metalloproteinase mep (635 aa).

The N-terminal stretch at methionine 1–alanine 19 is a signal peptide. Positions histidine 20 to glutamate 246 are excised as a propeptide. Residue asparagine 287 is glycosylated (N-linked (GlcNAc...) asparagine). The segment covering threonine 290–leucine 309 has biased composition (polar residues). The disordered stretch occupies residues threonine 290–asparagine 311. Histidine 430 lines the Zn(2+) pocket. Glutamate 431 is an active-site residue. Histidine 434 lines the Zn(2+) pocket.

This sequence belongs to the peptidase M36 family. Zn(2+) is required as a cofactor.

The protein localises to the secreted. Its function is as follows. Secreted metalloproteinase that allows assimilation of proteinaceous substrates. This is Extracellular metalloproteinase mep (mep) from Aspergillus flavus (strain ATCC 200026 / FGSC A1120 / IAM 13836 / NRRL 3357 / JCM 12722 / SRRC 167).